The primary structure comprises 201 residues: Adenylyl-sulfate kinase (201 aa).

The disordered stretch occupies residues 1-23; that stretch reads MALHDENVVWHSHPVTPQQREQH. ATP is bound at residue 35–42; it reads GLSGSGKS. Catalysis depends on Ser-109, which acts as the Phosphoserine intermediate.

This sequence belongs to the APS kinase family.

It catalyses the reaction adenosine 5'-phosphosulfate + ATP = 3'-phosphoadenylyl sulfate + ADP + H(+). It participates in sulfur metabolism; hydrogen sulfide biosynthesis; sulfite from sulfate: step 2/3. In terms of biological role, catalyzes the synthesis of activated sulfate. In Escherichia coli O6:K15:H31 (strain 536 / UPEC), this protein is Adenylyl-sulfate kinase.